The chain runs to 344 residues: Phenylalanine--tRNA ligase alpha subunit (344 aa).

Residue Glu-257 coordinates Mg(2+).

This sequence belongs to the class-II aminoacyl-tRNA synthetase family. Phe-tRNA synthetase alpha subunit type 1 subfamily. As to quaternary structure, tetramer of two alpha and two beta subunits. Mg(2+) serves as cofactor.

It localises to the cytoplasm. The catalysed reaction is tRNA(Phe) + L-phenylalanine + ATP = L-phenylalanyl-tRNA(Phe) + AMP + diphosphate + H(+). This chain is Phenylalanine--tRNA ligase alpha subunit, found in Chlorobium chlorochromatii (strain CaD3).